Reading from the N-terminus, the 343-residue chain is S-adenosylmethionine:tRNA ribosyltransferase-isomerase (343 aa).

It belongs to the QueA family. As to quaternary structure, monomer.

The protein localises to the cytoplasm. The catalysed reaction is 7-aminomethyl-7-carbaguanosine(34) in tRNA + S-adenosyl-L-methionine = epoxyqueuosine(34) in tRNA + adenine + L-methionine + 2 H(+). Its pathway is tRNA modification; tRNA-queuosine biosynthesis. Its function is as follows. Transfers and isomerizes the ribose moiety from AdoMet to the 7-aminomethyl group of 7-deazaguanine (preQ1-tRNA) to give epoxyqueuosine (oQ-tRNA). This chain is S-adenosylmethionine:tRNA ribosyltransferase-isomerase, found in Latilactobacillus sakei subsp. sakei (strain 23K) (Lactobacillus sakei subsp. sakei).